A 468-amino-acid polypeptide reads, in one-letter code: Uronate isomerase (468 aa).

This sequence belongs to the metallo-dependent hydrolases superfamily. Uronate isomerase family.

The enzyme catalyses D-glucuronate = D-fructuronate. It catalyses the reaction aldehydo-D-galacturonate = keto-D-tagaturonate. It functions in the pathway carbohydrate metabolism; pentose and glucuronate interconversion. In Bacteroides fragilis (strain ATCC 25285 / DSM 2151 / CCUG 4856 / JCM 11019 / LMG 10263 / NCTC 9343 / Onslow / VPI 2553 / EN-2), this protein is Uronate isomerase.